The sequence spans 105 residues: Large ribosomal subunit protein uL24 (105 aa).

Belongs to the universal ribosomal protein uL24 family. In terms of assembly, part of the 50S ribosomal subunit.

One of two assembly initiator proteins, it binds directly to the 5'-end of the 23S rRNA, where it nucleates assembly of the 50S subunit. In terms of biological role, one of the proteins that surrounds the polypeptide exit tunnel on the outside of the subunit. In Xanthobacter autotrophicus (strain ATCC BAA-1158 / Py2), this protein is Large ribosomal subunit protein uL24.